The chain runs to 765 residues: MAKNLKKGKKVFNKSTRKINRLKEEEELAKLQERINNYDPKTDEASVSQFSDLPITENTLKGLKEATFVSLTDIQKKTIPIALKGEDLMGTARTGSGKTLAFLIPVIESLIRNKITEYDGLAALIVSPTRELAVQIFEVLTKIGKYNTFSAGLVTGGKDVQFEKERVSRMNILVGTPGRISQHLNEAVGMETSNLQVLVLDEADRCLDMGFKKQIDNILGHLPTTRQTLLFSATQSESVNDLARLSLTNPNKIGVSSDQEVSATPESLEQYYVKVPLDEKLDVLWSFIKSHLKSKILVFFSSSKQVQYTYETFRTLQPGISLMKLYGRHKQTSRLETTMKFSQAQHACLFATDIVARGLDFPAIDWVVQVDCPEDAATYVHRVGRSARFGRKGKSLLMLLPSEEEGMLKRLKIHKIEPKLMNIKQKSKKSIRPQLQSLCFKDPVMKNLGQRAFIAYFKSVHIQKDKDVFKVEELPAESYAASLGLPGAPKIKIKGGESNKEKKNASRKLIALAKTDADGEVQTGNEKVRTKYDRMFERKNQTILSDHYLNMTGNKVNSDGESEDEDFMTVKRKDHELKEEELPDLTIPVSKRQAKKALSRKATLASKGNPTKLKFDDDGVAHAIYELEDEDDFIKAGDAKKQKEEFVNKERETMKISDITDKEVERQKRQEKKRKRKEIERRMREEEEEDFDNEQTVVTLGAPDLDRDLQYDNGSDVEEPVSKKPKWFEGGDDDKSKNTNDGFVEYDEPETLEDLESLTARLIGN.

The Q motif signature appears at 48–76; the sequence is SQFSDLPITENTLKGLKEATFVSLTDIQK. Residues 79–253 enclose the Helicase ATP-binding domain; that stretch reads IPIALKGEDL…RLSLTNPNKI (175 aa). 92 to 99 serves as a coordination point for ATP; sequence ARTGSGKT. The short motif at 201–204 is the DEAD box element; that stretch reads DEAD. Residues 267–439 form the Helicase C-terminal domain; that stretch reads SLEQYYVKVP…SIRPQLQSLC (173 aa). Basic and acidic residues-rich tracts occupy residues 655-668 and 720-738; these read KISD…ERQK and PVSK…KSKN. A disordered region spans residues 655 to 765; the sequence is KISDITDKEV…ESLTARLIGN (111 aa). Positions 744 to 756 are enriched in acidic residues; the sequence is VEYDEPETLEDLE.

This sequence belongs to the DEAD box helicase family. DDX10/DBP4 subfamily. As to quaternary structure, interacts with the U3 and U14 snoRNAs. Associates with pre-ribosomal complexes.

It localises to the nucleus. It is found in the nucleolus. It carries out the reaction ATP + H2O = ADP + phosphate + H(+). Its function is as follows. ATP-dependent RNA helicase required for ribosome biogenesis. Involved in the release of U14 snoRNA in pre-ribosomal complexes. Required for pre-rRNA cleavage at site A2. In Candida albicans (strain SC5314 / ATCC MYA-2876) (Yeast), this protein is ATP-dependent RNA helicase DBP4 (DBP4).